The chain runs to 276 residues: MSGKARLAGVLGWPVSHSRSPRLHGFWLEQMGIDGAYLPLAVAPEHLETVIRALPRMGFAGANVTVPHKEAVMRLVDHLDPLARRIGAVNTLVVRQDGTLEGRNTDAYGFFENLRQGCPLWEPTSGPAAVIGAGGAARAVVAALADAGVPEIRLANRSRERAATLAADLGGPVTVVDWAERAESLEGCALLVNTTTLGMTGQSSLDLDLAALPTTSVVNDIVYVPLVTDLLARATARGNPIVDGLGMLLHQAVPGFEAWFGQRPQVSDQLRAFVLS.

Residues serine 18–serine 20 and threonine 65 contribute to the shikimate site. Lysine 69 (proton acceptor) is an active-site residue. Shikimate is bound by residues asparagine 90 and aspartate 106. NADP(+) contacts are provided by residues glycine 132–alanine 136 and isoleucine 221. A shikimate-binding site is contributed by tyrosine 223. An NADP(+)-binding site is contributed by glycine 244.

It belongs to the shikimate dehydrogenase family. As to quaternary structure, homodimer.

It catalyses the reaction shikimate + NADP(+) = 3-dehydroshikimate + NADPH + H(+). Its pathway is metabolic intermediate biosynthesis; chorismate biosynthesis; chorismate from D-erythrose 4-phosphate and phosphoenolpyruvate: step 4/7. Functionally, involved in the biosynthesis of the chorismate, which leads to the biosynthesis of aromatic amino acids. Catalyzes the reversible NADPH linked reduction of 3-dehydroshikimate (DHSA) to yield shikimate (SA). The chain is Shikimate dehydrogenase (NADP(+)) from Paramagnetospirillum magneticum (strain ATCC 700264 / AMB-1) (Magnetospirillum magneticum).